The primary structure comprises 377 residues: Flap endonuclease 1 (377 aa).

Positions 1–105 are N-domain; the sequence is MGIKGLNAII…HELSKRTARR (105 aa). A Mg(2+)-binding site is contributed by D34. Residues R47 and R71 each coordinate DNA. Position 87 (D87) interacts with Mg(2+). Residues 99–119 are disordered; that stretch reads SKRTARREETEKKLQEATDQA. An I-domain region spans residues 120–251; sequence EKMKQERRLV…VTALKLIKEY (132 aa). Mg(2+)-binding residues include E156, E158, D177, and D179. E156 contributes to the DNA binding site. Positions 229 and 231 each coordinate DNA. Position 231 (D231) interacts with Mg(2+). The tract at residues 338-346 is interaction with PCNA; sequence VQGRLDGFF.

It belongs to the XPG/RAD2 endonuclease family. FEN1 subfamily. As to quaternary structure, interacts with PCNA. Three molecules of FEN1 bind to one PCNA trimer with each molecule binding to one PCNA monomer. PCNA stimulates the nuclease activity without altering cleavage specificity. Mg(2+) serves as cofactor. Post-translationally, phosphorylated. Phosphorylation upon DNA damage induces relocalization to the nuclear plasma.

The protein localises to the nucleus. The protein resides in the nucleolus. Its subcellular location is the nucleoplasm. It localises to the mitochondrion. Its function is as follows. Structure-specific nuclease with 5'-flap endonuclease and 5'-3' exonuclease activities involved in DNA replication and repair. During DNA replication, cleaves the 5'-overhanging flap structure that is generated by displacement synthesis when DNA polymerase encounters the 5'-end of a downstream Okazaki fragment. It enters the flap from the 5'-end and then tracks to cleave the flap base, leaving a nick for ligation. Also involved in the long patch base excision repair (LP-BER) pathway, by cleaving within the apurinic/apyrimidinic (AP) site-terminated flap. Acts as a genome stabilization factor that prevents flaps from equilibrating into structures that lead to duplications and deletions. Also possesses 5'-3' exonuclease activity on nicked or gapped double-stranded DNA, and exhibits RNase H activity. Also involved in replication and repair of rDNA and in repairing mitochondrial DNA. This chain is Flap endonuclease 1, found in Vanderwaltozyma polyspora (strain ATCC 22028 / DSM 70294 / BCRC 21397 / CBS 2163 / NBRC 10782 / NRRL Y-8283 / UCD 57-17) (Kluyveromyces polysporus).